A 328-amino-acid polypeptide reads, in one-letter code: Ribosomal RNA small subunit methyltransferase H (328 aa).

S-adenosyl-L-methionine-binding positions include 37-39 (GGH), D57, F83, D104, and Q111.

It belongs to the methyltransferase superfamily. RsmH family.

It localises to the cytoplasm. It catalyses the reaction cytidine(1402) in 16S rRNA + S-adenosyl-L-methionine = N(4)-methylcytidine(1402) in 16S rRNA + S-adenosyl-L-homocysteine + H(+). Its function is as follows. Specifically methylates the N4 position of cytidine in position 1402 (C1402) of 16S rRNA. In Neisseria meningitidis serogroup B (strain ATCC BAA-335 / MC58), this protein is Ribosomal RNA small subunit methyltransferase H.